A 798-amino-acid chain; its full sequence is Phenylalanine--tRNA ligase beta subunit (798 aa).

The tRNA-binding domain occupies 39–148 (GKDLDNVVIG…EDAPIGTEYR (110 aa)). The region spanning 401-477 (PQRAEISLNL…RMYGFDNIEA (77 aa)) is the B5 domain. Asp455, Asp461, Glu464, and Glu465 together coordinate Mg(2+). One can recognise an FDX-ACB domain in the interval 705–797 (SKYPEVLRDL…IKDKYNGEIR (93 aa)).

The protein belongs to the phenylalanyl-tRNA synthetase beta subunit family. Type 1 subfamily. As to quaternary structure, tetramer of two alpha and two beta subunits. Requires Mg(2+) as cofactor.

Its subcellular location is the cytoplasm. The enzyme catalyses tRNA(Phe) + L-phenylalanine + ATP = L-phenylalanyl-tRNA(Phe) + AMP + diphosphate + H(+). The protein is Phenylalanine--tRNA ligase beta subunit of Fusobacterium nucleatum subsp. nucleatum (strain ATCC 25586 / DSM 15643 / BCRC 10681 / CIP 101130 / JCM 8532 / KCTC 2640 / LMG 13131 / VPI 4355).